Consider the following 146-residue polypeptide: Angiogenin (146 aa).

Positions 1-24 (MVMGLHLLFLVFILGLGLTPPTLA) are cleaved as a signal peptide. Q25 carries the pyrrolidone carboxylic acid modification. H37 functions as the Proton acceptor in the catalytic mechanism. 3 disulfides stabilise this stretch: C50/C105, C63/C116, and C81/C131. Positions 55–59 (RLRNM) match the Nucleolar localization signal motif. Positions 105 and 127 each coordinate tRNA. H138 acts as the Proton donor in catalysis.

It belongs to the pancreatic ribonuclease family. In terms of assembly, homodimer. Interacts with RNH1; inhibiting ANG ribonuclease activity. Interacts with PCNA.

The protein resides in the secreted. The protein localises to the nucleus. Its subcellular location is the nucleolus. It localises to the cytoplasm. It is found in the stress granule. With respect to regulation, has weak tRNA ribonuclease activity by itself due to partial autoinhibition by its C-terminus, which folds into a short alpha-helix that partially occludes the substrate-binding site. In absence of stress, the ribonuclease activity is inhibited by RNH1 in the cytoplasm. In response to stress, dissociates from RNH1 in the cytoplasm and associates with cytoplasmic ribosomes with vacant A-sites: ribosomes directly activate the tRNA ribonuclease activity of ANG by refolding the C-terminal alpha-helix. In response to stress, the angiogenic activity of ANG is inhibited by RNH1 in the nucleus. Its function is as follows. Secreted ribonuclease that can either promote or restrict cell proliferation of target cells, depending on the context. Endocytosed in target cells via its receptor PLXNB2 and translocates to the cytoplasm or nucleus. Under stress conditions, localizes to the cytoplasm and promotes the assembly of stress granules (SGs): specifically cleaves a subset of tRNAs within anticodon loops to produce tRNA-derived stress-induced fragments (tiRNAs), resulting in translation repression and inhibition of cell proliferation. tiRNas also prevent formation of apoptosome, thereby promoting cell survival. Preferentially cleaves RNAs between a pyrimidine and an adenosine residue, suggesting that it cleaves the anticodon loop of tRNA(Ala) (32-UUAGCAU-38) after positions 33 and 36. Cleaves a subset of tRNAs, including tRNA(Ala), tRNA(Glu), tRNA(Gly), tRNA(Lys), tRNA(Val), tRNA(His), tRNA(Asp) and tRNA(Sec). Under growth conditions and in differentiated cells, translocates to the nucleus and stimulates ribosomal RNA (rRNA) transcription, including that containing the initiation site sequences of 45S rRNA, thereby promoting cell growth and proliferation. Angiogenin induces vascularization of normal and malignant tissues via its ability to promote rRNA transcription. Involved in hematopoietic stem and progenitor cell (HSPC) growth and survival by promoting rRNA transcription in growth conditions and inhibiting translation in response to stress, respectively. Mediates the crosstalk between myeloid and intestinal epithelial cells to protect the intestinal epithelial barrier integrity: secreted by myeloid cells and promotes intestinal epithelial cells proliferation and survival. Also mediates osteoclast-endothelial cell crosstalk in growing bone: produced by osteoclasts and protects the neighboring vascular cells against senescence by promoting rRNA transcription. This chain is Angiogenin (ANG), found in Saguinus oedipus (Cotton-top tamarin).